A 514-amino-acid chain; its full sequence is Ankyrin repeat domain-containing protein 34B (514 aa).

ANK repeat units follow at residues 9-38 (SEGN…YINE), 42-79 (RGET…DPNI), 83-113 (SGKT…DLSL), and 117-146 (SSYS…AKGK). Residues 220–249 (NDDTWDPGSPVRKPALAPKGPKLPHAPPWV) form a disordered region. Serine 263 bears the Phosphoserine mark. Residue threonine 272 is modified to Phosphothreonine. Serine 296 is subject to Phosphoserine.

This sequence belongs to the ANKRD34 family. In terms of processing, phosphorylated.

The protein localises to the cytoplasm. It is found in the nucleus. The chain is Ankyrin repeat domain-containing protein 34B (ANKRD34B) from Homo sapiens (Human).